Consider the following 241-residue polypeptide: 2-C-methyl-D-erythritol 4-phosphate cytidylyltransferase (241 aa).

The protein belongs to the IspD/TarI cytidylyltransferase family. IspD subfamily.

It catalyses the reaction 2-C-methyl-D-erythritol 4-phosphate + CTP + H(+) = 4-CDP-2-C-methyl-D-erythritol + diphosphate. The protein operates within isoprenoid biosynthesis; isopentenyl diphosphate biosynthesis via DXP pathway; isopentenyl diphosphate from 1-deoxy-D-xylulose 5-phosphate: step 2/6. Its function is as follows. Catalyzes the formation of 4-diphosphocytidyl-2-C-methyl-D-erythritol from CTP and 2-C-methyl-D-erythritol 4-phosphate (MEP). The sequence is that of 2-C-methyl-D-erythritol 4-phosphate cytidylyltransferase from Baumannia cicadellinicola subsp. Homalodisca coagulata.